We begin with the raw amino-acid sequence, 482 residues long: tRNA sulfurtransferase (482 aa).

In terms of domain architecture, THUMP spans 61 to 165 (LAIRDALTRI…DDRLLLIKGR (105 aa)). ATP contacts are provided by residues 183–184 (LI), Lys265, Gly287, and Gln296. Cys344 and Cys456 are joined by a disulfide. A Rhodanese domain is found at 404–482 (FGANDVILDI…GFANVKVYRP (79 aa)). Cys456 (cysteine persulfide intermediate) is an active-site residue.

This sequence belongs to the ThiI family.

Its subcellular location is the cytoplasm. The catalysed reaction is [ThiI sulfur-carrier protein]-S-sulfanyl-L-cysteine + a uridine in tRNA + 2 reduced [2Fe-2S]-[ferredoxin] + ATP + H(+) = [ThiI sulfur-carrier protein]-L-cysteine + a 4-thiouridine in tRNA + 2 oxidized [2Fe-2S]-[ferredoxin] + AMP + diphosphate. The enzyme catalyses [ThiS sulfur-carrier protein]-C-terminal Gly-Gly-AMP + S-sulfanyl-L-cysteinyl-[cysteine desulfurase] + AH2 = [ThiS sulfur-carrier protein]-C-terminal-Gly-aminoethanethioate + L-cysteinyl-[cysteine desulfurase] + A + AMP + 2 H(+). It participates in cofactor biosynthesis; thiamine diphosphate biosynthesis. Catalyzes the ATP-dependent transfer of a sulfur to tRNA to produce 4-thiouridine in position 8 of tRNAs, which functions as a near-UV photosensor. Also catalyzes the transfer of sulfur to the sulfur carrier protein ThiS, forming ThiS-thiocarboxylate. This is a step in the synthesis of thiazole, in the thiamine biosynthesis pathway. The sulfur is donated as persulfide by IscS. This chain is tRNA sulfurtransferase, found in Salmonella agona (strain SL483).